We begin with the raw amino-acid sequence, 447 residues long: Argininosuccinate synthase (447 aa).

ATP-binding positions include 17-25 and Ala43; that span reads AFSGGLDTS. Tyr99 is an L-citrulline binding site. ATP-binding residues include Gly129 and Thr131. L-aspartate-binding residues include Thr131, Asn135, and Asp136. Residue Asn135 participates in L-citrulline binding. Residue Asp136 participates in ATP binding. Residues Arg139 and Ser192 each contribute to the L-citrulline site. Residue Asp194 coordinates ATP. L-citrulline is bound by residues Thr201, Glu203, and Glu280.

This sequence belongs to the argininosuccinate synthase family. Type 2 subfamily. As to quaternary structure, homotetramer.

The protein resides in the cytoplasm. It carries out the reaction L-citrulline + L-aspartate + ATP = 2-(N(omega)-L-arginino)succinate + AMP + diphosphate + H(+). Its pathway is amino-acid biosynthesis; L-arginine biosynthesis; L-arginine from L-ornithine and carbamoyl phosphate: step 2/3. In Shigella flexneri serotype 5b (strain 8401), this protein is Argininosuccinate synthase.